Consider the following 258-residue polypeptide: uncharacterized protein (258 aa).

Positions 17, 53, 80, 113, 145, 149, 178, and 180 each coordinate NADP(+). Residue Y145 is the Proton donor of the active site. Residue K149 is the Lowers pKa of active site Tyr of the active site.

The protein belongs to the short-chain dehydrogenases/reductases (SDR) family.

The protein localises to the cytoplasm. The protein resides in the nucleus. This is an uncharacterized protein from Schizosaccharomyces pombe (strain 972 / ATCC 24843) (Fission yeast).